We begin with the raw amino-acid sequence, 1120 residues long: Vacuolar cation-chloride cotransporter 1 (1120 aa).

Residues 1-21 (MVSRFYQIPGTHRPSSAISSS) form a disordered region. The Cytoplasmic segment spans residues 1-62 (MVSRFYQIPG…YDPDNPNKDK (62 aa)). Residue Ser-34 is modified to Phosphoserine. The chain crosses the membrane as a helical span at residues 63–83 (LGTYDGVFVPTALNVLSILMF). Topologically, residues 84–85 (LR) are vacuolar. Residues 86 to 106 (FGFILGQLGIICTIGLLLLSY) traverse the membrane as a helical segment. Residues 107–145 (TINLLTTLSISAISTNGTVRGGGAYYMISRSLGPEFGGS) are Cytoplasmic-facing. The chain crosses the membrane as a helical span at residues 146-166 (IGLVFFLGQVFNAGMNAVGII). The Vacuolar portion of the chain corresponds to 167–193 (EPLLYNLGYSAQGEPPAALGELLPRGH). A helical transmembrane segment spans residues 194-214 (WHEFTYATVILFLCFSVAFVG). The Cytoplasmic portion of the chain corresponds to 215-221 (SQTVSRA). Residues 222 to 242 (GNILFLVLAASIFSIPLSALI) traverse the membrane as a helical segment. Over 243–283 (RSPFTEGGISYTGPSWQTFHDNLLPHLTKGAAGSLLKGKET) the chain is Vacuolar. A helical membrane pass occupies residues 284 to 304 (FNDLFGVFFPATAGIFAGAGM). Residues 305-317 (SSELRKPSKSIPK) lie on the Cytoplasmic side of the membrane. A helical membrane pass occupies residues 318–338 (GTLWGLLFTFICYAVVVFSMG). Residues 339-360 (CSIPRRSLYDEVQIIQTISSVQ) are Vacuolar-facing. A helical transmembrane segment spans residues 361–381 (WVIFMGEMATSLFSIIVGMLG). Over 382 to 393 (AAYVLEAIAKDN) the chain is Cytoplasmic. Residues 394 to 414 (IIPGLEIFAHSPLYSLIFTWI) traverse the membrane as a helical segment. At 415-430 (LTQLCLFSDVNKIATF) the chain is on the vacuolar side. Residues 431–451 (ITMTFLMTFVVMNLACFLLGI) form a helical membrane-spanning segment. Residues 452–462 (SSAPNFRPSFK) lie on the Cytoplasmic side of the membrane. A helical transmembrane segment spans residues 463 to 482 (YFNRYTTAIGALLSVVAMLI). At 483–487 (VDGIS) the chain is on the vacuolar side. A helical membrane pass occupies residues 488–506 (ASVLFLAMILLFLFIHYFS). The Cytoplasmic portion of the chain corresponds to 507–1120 (PPKSWGDVSQ…SQTMTVTTAL (614 aa)). Residues Ser-654, Ser-915, and Ser-918 each carry the phosphoserine modification.

The protein belongs to the SLC12A transporter family.

It localises to the vacuole membrane. Catalyzes the coordinated symport of chloride with potassium ions across the vacuolar membrane. Involved in vacuolar osmoregulation. The sequence is that of Vacuolar cation-chloride cotransporter 1 from Saccharomyces cerevisiae (strain ATCC 204508 / S288c) (Baker's yeast).